Here is a 605-residue protein sequence, read N- to C-terminus: DNA mismatch repair protein MutL (605 aa).

Belongs to the DNA mismatch repair MutL/HexB family.

Functionally, this protein is involved in the repair of mismatches in DNA. It is required for dam-dependent methyl-directed DNA mismatch repair. May act as a 'molecular matchmaker', a protein that promotes the formation of a stable complex between two or more DNA-binding proteins in an ATP-dependent manner without itself being part of a final effector complex. This chain is DNA mismatch repair protein MutL, found in Exiguobacterium sp. (strain ATCC BAA-1283 / AT1b).